We begin with the raw amino-acid sequence, 888 residues long: Calcium-transporting ATPase 1 (888 aa).

Helical transmembrane passes span 53–75 (IFAQ…SAFV), 79–97 (ADAS…IGVV), 246–266 (VGKY…LIGF), and 283–303 (AVAA…AIGV). 4 residues coordinate Ca(2+): V284, A285, I287, and E289. Residue D331 is the 4-aspartylphosphate intermediate of the active site. 6 consecutive transmembrane segments (helical) span residues 675-695 (ILFL…AILL), 703-723 (PIHI…SLGV), 747-767 (VPFL…AFIA), 791-811 (LLHA…VHSF), 831-851 (LVFS…IPPL), and 865-885 (WGFV…IKLA). Ca(2+) is bound by residues N710 and D714.

The protein belongs to the cation transport ATPase (P-type) (TC 3.A.3) family. Type IIA subfamily.

It is found in the cell membrane. The enzyme catalyses Ca(2+)(in) + ATP + H2O = Ca(2+)(out) + ADP + phosphate + H(+). Its activity is regulated as follows. Inhibited by cyclopiazonic acid (CPA). Functionally, catalyzes the hydrolysis of ATP coupled with the transport of calcium. This is Calcium-transporting ATPase 1 from Bacillus cereus (strain ATCC 10987 / NRS 248).